The following is a 190-amino-acid chain: Probable RNA-binding protein 18 (190 aa).

An RRM domain is found at 25 to 106; the sequence is HRLWIGNLDP…KKLVVRWAHA (82 aa). The interval 166–190 is disordered; that stretch reads VYSYFKPPDKKRTTPYSRTAWKSRR.

The protein is Probable RNA-binding protein 18 (RBM18) of Bos taurus (Bovine).